The chain runs to 160 residues: Bursicon (160 aa).

The signal sequence occupies residues 1–20 (MSVLNTFLVIVALILCYVND). The 94-residue stretch at 38 to 131 (CQECQMTAVI…PLQCMCRPCG (94 aa)) folds into the CTCK domain. 5 cysteine pairs are disulfide-bonded: Cys41–Cys90, Cys55–Cys104, Cys65–Cys125, Cys69–Cys127, and Cys87–Cys130.

In terms of assembly, heterodimer of burs and pburs.

It localises to the secreted. Functionally, final heterodimeric neurohormone released at the end of the molting cycle, involved in the sclerotization (tanning) of the insect cuticle, melanization and wing spreading. The sequence is that of Bursicon from Bombyx mori (Silk moth).